Consider the following 465-residue polypeptide: Glutamate--tRNA ligase (465 aa).

The short motif at 10 to 20 is the 'HIGH' region element; that stretch reads PSPTGQLHIGG. Zn(2+)-binding residues include Cys99, Cys101, Cys126, and Glu128. The 'KMSKS' region signature appears at 236–240; the sequence is KLSKR. Lys239 contacts ATP.

Belongs to the class-I aminoacyl-tRNA synthetase family. Glutamate--tRNA ligase type 1 subfamily. Monomer. The cofactor is Zn(2+).

It localises to the cytoplasm. The enzyme catalyses tRNA(Glu) + L-glutamate + ATP = L-glutamyl-tRNA(Glu) + AMP + diphosphate. Functionally, catalyzes the attachment of glutamate to tRNA(Glu) in a two-step reaction: glutamate is first activated by ATP to form Glu-AMP and then transferred to the acceptor end of tRNA(Glu). The chain is Glutamate--tRNA ligase from Lawsonia intracellularis (strain PHE/MN1-00).